A 284-amino-acid polypeptide reads, in one-letter code: MLSKQIPLGIYEKALPAGECWLERLQLAKTLGFDFVEMSVDETDERLSRLDWSREQRLALVNAIVETGVRVPSMCLSAHRRFPLGSEDDAVRAQGLEIMRKAIQFAQDVGIRVIQLAGYDVYYQEANNETRRRFRDGLKESVEMASRAQVTLAMEIMDYPLMNSISKALGYAHYLNNPWFQLYPDIGNLSAWDNDVQMELQAGIGHIVAVHVKDTKSGVFKNVPFGEGVVDFERCFETLKQSGYCGPYLIEMWSETAEDPAAEVAKARDWVKARMAKAGMVEAA.

The protein belongs to the L-ribulose-5-phosphate 3-epimerase family.

The catalysed reaction is L-ribulose 5-phosphate = L-xylulose 5-phosphate. The protein operates within cofactor degradation; L-ascorbate degradation; D-xylulose 5-phosphate from L-ascorbate: step 3/4. Catalyzes the isomerization of L-xylulose-5-phosphate to L-ribulose-5-phosphate. Is involved in the anaerobic L-ascorbate utilization. In Escherichia coli (strain ATCC 8739 / DSM 1576 / NBRC 3972 / NCIMB 8545 / WDCM 00012 / Crooks), this protein is L-ribulose-5-phosphate 3-epimerase UlaE.